Reading from the N-terminus, the 162-residue chain is NADH-quinone oxidoreductase subunit I (162 aa).

4Fe-4S ferredoxin-type domains lie at L53–E83 and T93–I122. [4Fe-4S] cluster contacts are provided by C63, C66, C69, C73, C102, C105, C108, and C112.

Belongs to the complex I 23 kDa subunit family. NDH-1 is composed of 14 different subunits. Subunits NuoA, H, J, K, L, M, N constitute the membrane sector of the complex. It depends on [4Fe-4S] cluster as a cofactor.

Its subcellular location is the cell inner membrane. It carries out the reaction a quinone + NADH + 5 H(+)(in) = a quinol + NAD(+) + 4 H(+)(out). In terms of biological role, NDH-1 shuttles electrons from NADH, via FMN and iron-sulfur (Fe-S) centers, to quinones in the respiratory chain. The immediate electron acceptor for the enzyme in this species is believed to be ubiquinone. Couples the redox reaction to proton translocation (for every two electrons transferred, four hydrogen ions are translocated across the cytoplasmic membrane), and thus conserves the redox energy in a proton gradient. The polypeptide is NADH-quinone oxidoreductase subunit I (Thiobacillus denitrificans (strain ATCC 25259 / T1)).